The chain runs to 338 residues: MPSNLNIVKVTKPQEENKNFLHKNTNEPNEMEQSQTQEAVTENFTENSNLSANEHAARRGRLNLKTVDHIETYPIVQETEEIAKKIALTRIILAQTKPRIDKVVVSRPVQAVAPVVNFFDKMANSTLSTVERVVPSLKTKTYKRLGEEIALPYTLSKKYGKQLRDTTARNGDNYVYQPVHGRLMKFRKYYNEKFIDTKGKPLIRGQLDPVLLPVNNTFEKVTVKYLPKGKKVPNDSFSCEFNRGLALEYNFMTRAVSAVSHQVVGIAKLPIAYGYHTNSVYNKNLDKQADLKMKNVLRGTWDTITDLEREIWASVTDRSLFRFFGNKSEGGDLPHLVQ.

The disordered stretch occupies residues 14 to 37 (QEENKNFLHKNTNEPNEMEQSQTQ). Residues 22–37 (HKNTNEPNEMEQSQTQ) are compositionally biased toward polar residues.

Its function is as follows. Not essential for sporulation. Might be a component of the cell wall. The protein is Sporulation-specific protein 4 (SPS4) of Saccharomyces cerevisiae (strain ATCC 204508 / S288c) (Baker's yeast).